Here is a 712-residue protein sequence, read N- to C-terminus: Glycine--tRNA ligase beta subunit (712 aa).

The protein belongs to the class-II aminoacyl-tRNA synthetase family. As to quaternary structure, tetramer of two alpha and two beta subunits.

Its subcellular location is the cytoplasm. It carries out the reaction tRNA(Gly) + glycine + ATP = glycyl-tRNA(Gly) + AMP + diphosphate. The protein is Glycine--tRNA ligase beta subunit of Dechloromonas aromatica (strain RCB).